The chain runs to 279 residues: Early nodulin-like protein 18 (279 aa).

Residues 1–24 (MAGAVATVSVGLAWLGLMAAAASA) form the signal peptide. The region spanning 25 to 133 (TQFRVGGGRG…GEKLVVVVMA (109 aa)) is the Phytocyanin domain. Cys-82 and Cys-121 form a disulfide bridge. A glycan (N-linked (GlcNAc...) asparagine) is linked at Asn-83. A disordered region spans residues 138–256 (RHAPPPSPPA…ANDRSGAAAA (119 aa)). A compositionally biased stretch (pro residues) spans 140 to 168 (APPPSPPAVPPPVAPVPMPSPASSPPSPA). The span at 169–185 (PAAATPSLAPSPVATTP) shows a compositional bias: low complexity. A compositionally biased stretch (pro residues) spans 186–199 (SPSPSVSPMAPAPA). 2 stretches are compositionally biased toward low complexity: residues 212–226 (AAMA…GGVA) and 234–256 (TDGA…AAAA). N-linked (GlcNAc...) asparagine glycosylation is present at Asn-238. Residue Ser-251 is the site of GPI-anchor amidated serine attachment. Residues 252–279 (GAAAAAPVVAGVVVTSLGAYIGYAMLAI) constitute a propeptide, removed in mature form.

It belongs to the early nodulin-like (ENODL) family. As to expression, specifically expressed in reproductive tissues. Mainly observed in developing seeds and in mature leaves.

The protein resides in the cell membrane. May act as a carbohydrate transporter. Promotes tolerance to salt stress in a redox-dependent manner. This Oryza sativa subsp. japonica (Rice) protein is Early nodulin-like protein 18.